The following is a 113-amino-acid chain: U11-theraphotoxin-Hhn1a (113 aa).

The signal sequence occupies residues 1–21 (MNTVRVTFLLVFVLAVSLGQA). Positions 22 to 74 (DKDENRMEMQEKTEQGRSYLDFAENLLLQKLEELEAKLLEEDSEESRNSRQKR) are excised as a propeptide. A disordered region spans residues 61-83 (EEDSEESRNSRQKRCIGEGVPCD). Intrachain disulfides connect C75–C90, C82–C95, and C89–C110.

This sequence belongs to the neurotoxin 14 (magi-1) family. 01 (HNTX-16) subfamily. As to expression, expressed by the venom gland.

It localises to the secreted. Probable ion channel inhibitor. This chain is U11-theraphotoxin-Hhn1a, found in Cyriopagopus hainanus (Chinese bird spider).